Consider the following 445-residue polypeptide: Rab GDP dissociation inhibitor beta (445 aa).

N-acetylmethionine is present on M1. K57 is modified (N6-succinyllysine). K112 carries the post-translational modification N6-acetyllysine. S130 is subject to Phosphoserine. At K269 the chain carries N6-acetyllysine. The residue at position 382 (S382) is a Phosphoserine.

The protein belongs to the Rab GDI family. As to quaternary structure, interacts with RHOH. Interacts with the GDP-bound inactive forms of RAB3A, RAB3B, RAB3C, RAB5A, RAB5B, RAB5C, RAB8A, RAB8B, RAB10, RAB12, RAB35, and RAB43; binds RAB3D to a lesser extent. Interacts with DZIP1; this interaction negatively regulates the interaction of GDI2 with GDP-bound RAB8A.

The protein resides in the cytoplasm. It localises to the membrane. Its subcellular location is the golgi apparatus. It is found in the trans-Golgi network. Functionally, GDP-dissociation inhibitor preventing the GDP to GTP exchange of most Rab proteins. By keeping these small GTPases in their inactive GDP-bound form regulates intracellular membrane trafficking. Negatively regulates protein transport to the cilium and ciliogenesis through the inhibition of RAB8A. The protein is Rab GDP dissociation inhibitor beta (GDI2) of Canis lupus familiaris (Dog).